Consider the following 758-residue polypeptide: 5-methyltetrahydropteroyltriglutamate--homocysteine methyltransferase (758 aa).

5-methyltetrahydropteroyltri-L-glutamate contacts are provided by residues 16 to 19 (RELK) and Lys112. L-homocysteine is bound by residues 433-435 (IGS) and Glu486. L-methionine is bound by residues 433–435 (IGS) and Glu486. 5-methyltetrahydropteroyltri-L-glutamate contacts are provided by residues 517 to 518 (RC) and Trp563. Residue Asp601 participates in L-homocysteine binding. Residue Asp601 participates in L-methionine binding. Glu607 lines the 5-methyltetrahydropteroyltri-L-glutamate pocket. 3 residues coordinate Zn(2+): His643, Cys645, and Glu667. The Proton donor role is filled by His696. Zn(2+) is bound at residue Cys728.

It belongs to the vitamin-B12 independent methionine synthase family. The cofactor is Zn(2+).

The enzyme catalyses 5-methyltetrahydropteroyltri-L-glutamate + L-homocysteine = tetrahydropteroyltri-L-glutamate + L-methionine. Its pathway is amino-acid biosynthesis; L-methionine biosynthesis via de novo pathway; L-methionine from L-homocysteine (MetE route): step 1/1. Functionally, catalyzes the transfer of a methyl group from 5-methyltetrahydrofolate to homocysteine resulting in methionine formation. The polypeptide is 5-methyltetrahydropteroyltriglutamate--homocysteine methyltransferase (Neisseria meningitidis serogroup C (strain 053442)).